The sequence spans 428 residues: PGL/p-HBAD biosynthesis glycosyltransferase MRA_2985 (428 aa).

The tract at residues 1–23 is disordered; it reads MEETSVAGDPGPDAGTSTAPNAA.

It belongs to the UDP-glycosyltransferase family.

Involved in glycosylation steps downstream of mono-O-methyl-glycosyl-p-hydroxybenzoic acid derivative (p-HBAD I) and 2-O-methyl-rhamnosyl-phenolphthiocerol dimycocerosate (mycoside B) during the p-hydroxybenzoic acid derivatives (p-HBAD) and glycosylated phenolphthiocerol dimycocerosates (PGL) biosynthesis. This chain is PGL/p-HBAD biosynthesis glycosyltransferase MRA_2985, found in Mycobacterium tuberculosis (strain ATCC 25177 / H37Ra).